We begin with the raw amino-acid sequence, 108 residues long: Tubulin-specific chaperone A (108 aa).

Residue Ala2 is modified to N-acetylalanine.

Belongs to the TBCA family. Supercomplex made of cofactors A to E. Cofactors A and D function by capturing and stabilizing tubulin in a quasi-native conformation. Cofactor E binds to the cofactor D-tubulin complex; interaction with cofactor C then causes the release of tubulin polypeptides that are committed to the native state.

The protein resides in the cytoplasm. It localises to the cytoskeleton. Tubulin-folding protein; involved in the early step of the tubulin folding pathway. This chain is Tubulin-specific chaperone A (TBCA), found in Gallus gallus (Chicken).